Here is a 102-residue protein sequence, read N- to C-terminus: Large ribosomal subunit protein uL24 (102 aa).

The protein belongs to the universal ribosomal protein uL24 family. Part of the 50S ribosomal subunit.

One of two assembly initiator proteins, it binds directly to the 5'-end of the 23S rRNA, where it nucleates assembly of the 50S subunit. Its function is as follows. One of the proteins that surrounds the polypeptide exit tunnel on the outside of the subunit. The protein is Large ribosomal subunit protein uL24 of Ralstonia pickettii (strain 12J).